A 300-amino-acid chain; its full sequence is m7GpppN-mRNA hydrolase NUDT17 (300 aa).

A Nudix hydrolase domain is found at 88 to 239 (SRGVDVGVAV…KECVQIPADL (152 aa)). The short motif at 127 to 148 (GHVELDEKLLDAGLRELLEETG) is the Nudix box element. Residues Glu142 and Glu146 each contribute to the Mg(2+) site.

It belongs to the Nudix hydrolase family. It depends on Mg(2+) as a cofactor. Mn(2+) is required as a cofactor.

It catalyses the reaction a 5'-end (N(7)-methyl 5'-triphosphoguanosine)-ribonucleoside in mRNA + H2O = N(7)-methyl-GDP + a 5'-end phospho-ribonucleoside in mRNA + 2 H(+). Functionally, acts as a decapping enzyme capable of hydrolyzing monomethylated capped RNAs (in vitro). Hydrolyzes monomethylated capped RNA after alpha and beta phosphates to form N(7)-methyl-GDP. Shows low activity towards unmethylated capped RNA. The polypeptide is m7GpppN-mRNA hydrolase NUDT17 (nudt17) (Danio rerio (Zebrafish)).